A 462-amino-acid chain; its full sequence is Glutamate-1-semialdehyde 2,1-aminomutase (462 aa).

The disordered stretch occupies residues Asp-178–Val-200. A compositionally biased stretch (low complexity) spans Arg-182–Arg-192. Lys-297 is modified (N6-(pyridoxal phosphate)lysine).

It belongs to the class-III pyridoxal-phosphate-dependent aminotransferase family. HemL subfamily. Homodimer. Pyridoxal 5'-phosphate is required as a cofactor.

The protein localises to the cytoplasm. The enzyme catalyses (S)-4-amino-5-oxopentanoate = 5-aminolevulinate. It functions in the pathway porphyrin-containing compound metabolism; protoporphyrin-IX biosynthesis; 5-aminolevulinate from L-glutamyl-tRNA(Glu): step 2/2. The protein is Glutamate-1-semialdehyde 2,1-aminomutase (hemL) of Mycobacterium bovis (strain ATCC BAA-935 / AF2122/97).